The sequence spans 176 residues: ATP-dependent protease subunit HslV (176 aa).

Thr2 is a catalytic residue. Gly157, Cys160, and Thr163 together coordinate Na(+).

Belongs to the peptidase T1B family. HslV subfamily. As to quaternary structure, a double ring-shaped homohexamer of HslV is capped on each side by a ring-shaped HslU homohexamer. The assembly of the HslU/HslV complex is dependent on binding of ATP.

It is found in the cytoplasm. The enzyme catalyses ATP-dependent cleavage of peptide bonds with broad specificity.. Allosterically activated by HslU binding. Functionally, protease subunit of a proteasome-like degradation complex believed to be a general protein degrading machinery. This chain is ATP-dependent protease subunit HslV, found in Marinobacter nauticus (strain ATCC 700491 / DSM 11845 / VT8) (Marinobacter aquaeolei).